The chain runs to 945 residues: Glutamyl aminopeptidase (945 aa).

The Cytoplasmic portion of the chain corresponds to 1 to 18 (MNFAEEEPSKKYCIKGKH). The chain crosses the membrane as a helical; Signal-anchor for type II membrane protein span at residues 19–39 (VAIICATVVAVGLIVGLSVGL). The Extracellular segment spans residues 40–945 (TRSCEPGTTP…SISEWFTSMP (906 aa)). The interval 45-77 (PGTTPAPSNPPPHTSTALPPQDQNVCPDSDDES) is disordered. N-linked (GlcNAc...) asparagine glycosylation is found at Asn-116 and Asn-189. Glu-215 serves as a coordination point for substrate. N-linked (GlcNAc...) asparagine glycosylation is found at Asn-236 and Asn-316. Residue 349–353 (GAMEN) participates in substrate binding. His-385 provides a ligand contact to Zn(2+). Glu-386 serves as the catalytic Proton acceptor. Zn(2+) is bound by residues His-389 and Glu-408. Residues Asn-546, Asn-584, Asn-601, Asn-640, Asn-669, Asn-754, Asn-766, and Asn-792 are each glycosylated (N-linked (GlcNAc...) asparagine). Substrate is bound at residue Arg-878.

The protein belongs to the peptidase M1 family. In terms of assembly, homodimer; disulfide-linked. It depends on Zn(2+) as a cofactor. As to expression, highest expression in kidney proximal tubules and ileum enterocytes. High expression also detected in liver and pituitary. Lower levels in heart, adrenal gland and brain. Not detected in aorta, lung or spleen. In heart, higher levels in ventricle than in atrium. Also expressed in glomerular mesangial cells.

It is found in the cell membrane. It carries out the reaction Release of N-terminal glutamate (and to a lesser extent aspartate) from a peptide.. Substrate specificity is modulated by calcium which enhances the enzymatic activity for cleavage of acidic residues while reducing its activity with basic residues. Inhibited by aminopeptidase inhibitors amastatin and bestatin. Its function is as follows. Regulates central hypertension through its calcium-modulated preference to cleave N-terminal acidic residues from peptides such as angiotensin II. In Rattus norvegicus (Rat), this protein is Glutamyl aminopeptidase (Enpep).